Here is a 181-residue protein sequence, read N- to C-terminus: Regulator of G-protein signaling 5 (181 aa).

The region spanning 64-180 (SLDKLLQNNY…VRSEFYQEFI (117 aa)) is the RGS domain.

It is found in the cytoplasm. The protein resides in the membrane. Inhibits signal transduction by increasing the GTPase activity of G protein alpha subunits thereby driving them into their inactive GDP-bound form. Binds to G(i)-alpha and G(o)-alpha, but not to G(s)-alpha. The protein is Regulator of G-protein signaling 5 (RGS5) of Bos taurus (Bovine).